The sequence spans 292 residues: Shikimate dehydrogenase (NADP(+)) (292 aa).

Shikimate contacts are provided by residues 25–27 and Thr-72; that span reads SKS. Lys-76 acts as the Proton acceptor in catalysis. Residues Asn-97 and Asp-113 each contribute to the shikimate site. NADP(+)-binding positions include 137-141, 161-166, and Met-230; these read GAGGA and NRTQSK. Position 232 (Tyr-232) interacts with shikimate. An NADP(+)-binding site is contributed by Gly-254.

Belongs to the shikimate dehydrogenase family. In terms of assembly, homodimer.

It catalyses the reaction shikimate + NADP(+) = 3-dehydroshikimate + NADPH + H(+). Its pathway is metabolic intermediate biosynthesis; chorismate biosynthesis; chorismate from D-erythrose 4-phosphate and phosphoenolpyruvate: step 4/7. Functionally, involved in the biosynthesis of the chorismate, which leads to the biosynthesis of aromatic amino acids. Catalyzes the reversible NADPH linked reduction of 3-dehydroshikimate (DHSA) to yield shikimate (SA). The protein is Shikimate dehydrogenase (NADP(+)) of Shewanella sp. (strain MR-4).